We begin with the raw amino-acid sequence, 196 residues long: Large ribosomal subunit protein mL66 (196 aa).

The N-terminal 34 residues, 1 to 34, are a transit peptide targeting the mitochondrion; sequence MAALNVLVSGCGRFLRGLLTGPTVTSWARPPARG.

This sequence belongs to the bacterial ribosomal protein bS18 family. Mitochondrion-specific ribosomal protein mL66 subfamily. In terms of assembly, component of the mitochondrial ribosome small subunit (28S) which comprises a 12S rRNA and about 30 distinct proteins.

It localises to the mitochondrion. This chain is Large ribosomal subunit protein mL66 (MRPS18A), found in Bos taurus (Bovine).